Here is a 275-residue protein sequence, read N- to C-terminus: Large ribosomal subunit protein uL2 (275 aa).

Residues 36–49 are compositionally biased toward polar residues; it reads TQSSTAGRNNNGRI. 2 disordered regions span residues 36 to 59 and 224 to 275; these read TQSSTAGRNNNGRITTRHKGGGHK and AMNP…RHKR. The segment covering 50-59 has biased composition (basic residues); that stretch reads TTRHKGGGHK.

It belongs to the universal ribosomal protein uL2 family. Part of the 50S ribosomal subunit. Forms a bridge to the 30S subunit in the 70S ribosome.

One of the primary rRNA binding proteins. Required for association of the 30S and 50S subunits to form the 70S ribosome, for tRNA binding and peptide bond formation. It has been suggested to have peptidyltransferase activity; this is somewhat controversial. Makes several contacts with the 16S rRNA in the 70S ribosome. The protein is Large ribosomal subunit protein uL2 of Burkholderia vietnamiensis (strain G4 / LMG 22486) (Burkholderia cepacia (strain R1808)).